The following is a 335-amino-acid chain: Peflin (335 aa).

Residues 23–37 (AMEETRREFEKEKQR) are compositionally biased toward basic and acidic residues. The disordered stretch occupies residues 23-92 (AMEETRREFE…SPRHTKTPVD (70 aa)). A compositionally biased stretch (polar residues) spans 43–53 (VTQAQTPNTRV). 5 EF-hand domains span residues 144–192 (KVAP…DDNS), 198–223 (SVDA…IALY), 224–259 (KRVK…LGYL), 260–300 (IPFE…LMRL), and 301–332 (TKLF…LGRF). Ca(2+)-binding residues include Asp-170, Arg-176, and Glu-181. Asp-237, Asn-239, Ser-241, Thr-243, and Glu-248 together coordinate Ca(2+).

As to quaternary structure, homodimer.

The protein localises to the cytoplasm. Its subcellular location is the nucleus. It localises to the bud tip. It is found in the bud neck. In terms of biological role, calcium-binding protein that is required for polar bud growth and cell wall abscission. Can also bind zinc ions. This is Peflin (PEF1) from Saccharomyces cerevisiae (strain ATCC 204508 / S288c) (Baker's yeast).